Here is a 393-residue protein sequence, read N- to C-terminus: NAD(P)H-quinone oxidoreductase subunit H, chloroplastic (393 aa).

Belongs to the complex I 49 kDa subunit family. NDH is composed of at least 16 different subunits, 5 of which are encoded in the nucleus.

The protein resides in the plastid. It is found in the chloroplast thylakoid membrane. The catalysed reaction is a plastoquinone + NADH + (n+1) H(+)(in) = a plastoquinol + NAD(+) + n H(+)(out). The enzyme catalyses a plastoquinone + NADPH + (n+1) H(+)(in) = a plastoquinol + NADP(+) + n H(+)(out). Its function is as follows. NDH shuttles electrons from NAD(P)H:plastoquinone, via FMN and iron-sulfur (Fe-S) centers, to quinones in the photosynthetic chain and possibly in a chloroplast respiratory chain. The immediate electron acceptor for the enzyme in this species is believed to be plastoquinone. Couples the redox reaction to proton translocation, and thus conserves the redox energy in a proton gradient. The chain is NAD(P)H-quinone oxidoreductase subunit H, chloroplastic from Lactuca sativa (Garden lettuce).